The primary structure comprises 714 residues: Probable metal-nicotianamine transporter YSL5 (714 aa).

A disordered region spans residues 17–44 (HELQETGFSPETEKVKNKNFEEDEEEED). Positions 27-36 (ETEKVKNKNF) are enriched in basic and acidic residues. Transmembrane regions (helical) follow at residues 67 to 87 (AFVVSFMLSILFSFIVMKLNL), 90 to 110 (GIIPSLNVSAGLLGFFFVKTW), 135 to 155 (CVVASSGIAFSGGFGTYLFGM), 175 to 195 (LGWIIGFLFVVSFLGLFSVVP), 236 to 256 (VLGKFFSLSFFWSFFQWFFTG), 295 to 315 (IINISVLLGGILSWGIMWPLI), 340 to 360 (VFIAVAIILGDGLYNFCKVLS), 413 to 433 (IPTWFAVGGYITIAATSTAIL), 445 to 465 (ILVIYICAPVLAFCNAYGAGL), 477 to 497 (LAIFTIGAWAGSEHGGMLAGL), 531 to 551 (FVSQVIGTAMGCVVSPCVFWL), 593 to 613 (LVLCYAFFGVAILVNIVKDSL), and 631 to 651 (FFLGPYFAIDMCVGSLILFIW).

Belongs to the YSL (TC 2.A.67.2) family.

It localises to the membrane. May be involved in the transport of nicotianamine-chelated metals. This Arabidopsis thaliana (Mouse-ear cress) protein is Probable metal-nicotianamine transporter YSL5 (YSL5).